Consider the following 122-residue polypeptide: Alpha-amylase/trypsin inhibitor (122 aa).

5 disulfide bridges follow: Cys6–Cys55, Cys20–Cys44, Cys29–Cys85, Cys45–Cys103, and Cys57–Cys114.

This sequence belongs to the protease inhibitor I6 (cereal trypsin/alpha-amylase inhibitor) family. Seeds.

It is found in the secreted. May play a protective role against endo- and exogenous hydrolytic activities in the Ragi seeds. This is Alpha-amylase/trypsin inhibitor from Eleusine coracana (Indian finger millet).